A 1000-amino-acid polypeptide reads, in one-letter code: Ribosome assembly protein 1 (1000 aa).

Residues 17–246 enclose the tr-type G domain; that stretch reads ENIRNFTLLA…YEKKLGLKQK (230 aa). Residues 26 to 33, 100 to 104, and 154 to 157 each bind GTP; these read AHVDHGKT, DSPGH, and NKMD.

The protein belongs to the TRAFAC class translation factor GTPase superfamily. Classic translation factor GTPase family.

Its subcellular location is the cytoplasm. The catalysed reaction is GTP + H2O = GDP + phosphate + H(+). GTPase activity is stimulated in the presence of 60S subunits. Functionally, GTPase involved in the biogenesis of the 60S ribosomal subunit and translational activation of ribosomes. Together with sdo1, may trigger the GTP-dependent release of tif6 from 60S pre-ribosomes in the cytoplasm, thereby activating ribosomes for translation competence by allowing 80S ribosome assembly and facilitating tif6 recycling to the nucleus, where it is required for 60S rRNA processing and nuclear export. Inhibits GTPase activity of ribosome-bound EF-2. The sequence is that of Ribosome assembly protein 1 (ria1) from Schizosaccharomyces pombe (strain 972 / ATCC 24843) (Fission yeast).